The chain runs to 160 residues: S-ribosylhomocysteine lyase (160 aa).

3 residues coordinate Fe cation: His57, His61, and Cys127.

The protein belongs to the LuxS family. In terms of assembly, homodimer. Fe cation is required as a cofactor.

It catalyses the reaction S-(5-deoxy-D-ribos-5-yl)-L-homocysteine = (S)-4,5-dihydroxypentane-2,3-dione + L-homocysteine. In terms of biological role, involved in the synthesis of autoinducer 2 (AI-2) which is secreted by bacteria and is used to communicate both the cell density and the metabolic potential of the environment. The regulation of gene expression in response to changes in cell density is called quorum sensing. Catalyzes the transformation of S-ribosylhomocysteine (RHC) to homocysteine (HC) and 4,5-dihydroxy-2,3-pentadione (DPD). The chain is S-ribosylhomocysteine lyase from Streptococcus mutans serotype c (strain ATCC 700610 / UA159).